A 103-amino-acid chain; its full sequence is Large ribosomal subunit protein uL24 (103 aa).

Belongs to the universal ribosomal protein uL24 family. In terms of assembly, part of the 50S ribosomal subunit.

Its function is as follows. One of two assembly initiator proteins, it binds directly to the 5'-end of the 23S rRNA, where it nucleates assembly of the 50S subunit. One of the proteins that surrounds the polypeptide exit tunnel on the outside of the subunit. The polypeptide is Large ribosomal subunit protein uL24 (Bacillus mycoides (strain KBAB4) (Bacillus weihenstephanensis)).